The following is a 453-amino-acid chain: Homeobox protein meis3 (453 aa).

A disordered region spans residues 33-64; the sequence is HHSLSQSAPYGSTGAAHRVPMPPGMGSNDGLK. The region spanning 102 to 185 is the MEIS N-terminal domain; that stretch reads GGDVCSSDSF…PIDLVIDDRD (84 aa). Residues 192–272 form a disordered region; sequence LEDFTGSCTS…RDKKRNKKRG (81 aa). Residues 197–209 are compositionally biased toward polar residues; it reads GSCTSLSDQNNSW. The span at 218-230 shows a compositional bias: low complexity; it reads STHSGTPGPSSGG. The span at 231–242 shows a compositional bias: polar residues; that stretch reads LASQSGDNSSEQ. The homeobox DNA-binding region spans 267–329; the sequence is RNKKRGIFPK…NARRRIVQPM (63 aa).

It belongs to the TALE/MEIS homeobox family.

It is found in the nucleus. In terms of biological role, a caudalizing protein which is required to pattern the anterior/posterior (A/P) axis during central nervous system (CNS) formation. Inhibits anterior neural expression and acts as a transcriptional activator to induce posterior neural gene expression. Maintains a proper A/P balance required for hindbrain formation by activating the FGF/MAPK pathway, which modulates the planar cell polarity (PCP) pathway. Interacts with retinoid signaling during hindbrain patterning. This is Homeobox protein meis3 from Xenopus tropicalis (Western clawed frog).